The primary structure comprises 438 residues: Shikimate transporter (438 aa).

12 consecutive transmembrane segments (helical) span residues 28 to 48 (FAGAVVDWYDFLLYGITAALV), 64 to 84 (LAAFATFGVGFLFRPLGGVIF), 109 to 129 (ALIGILPSFSTIGWWAPILLV), 133 to 153 (AIQGFAVGGEWGGAALLSVES), 168 to 188 (VGYGVGLLLSTGLVSLISMMT), 193 to 213 (FLSWGWRIPFLFSIVLVLGAL), 255 to 275 (IIALRLCELLTMYIVTAFALN), 287 to 307 (LFLNIGLLVGGLSCLTIPCFA), 318 to 337 (VYITGTLIGTLSAFPFFMAL), 341 to 363 (SIFWIVFFSIMLANIAHDMVVCV), 387 to 407 (VASVVGGGFTPFIAAALITYF), and 411 to 431 (WHSVAIYLLAGCLISAMTALL).

It belongs to the major facilitator superfamily. Metabolite:H+ Symporter (MHS) family (TC 2.A.1.6) family.

Its subcellular location is the cell inner membrane. The catalysed reaction is shikimate(in) + H(+)(in) = shikimate(out) + H(+)(out). Its function is as follows. Involved in the uptake of shikimate, an intermediate in the aromatic amino acid biosynthetic pathway. In Escherichia coli (strain K12), this protein is Shikimate transporter.